A 313-amino-acid polypeptide reads, in one-letter code: Ribosomal RNA small subunit methyltransferase H (313 aa).

S-adenosyl-L-methionine contacts are provided by residues 33–35 (GGH), aspartate 53, phenylalanine 80, aspartate 101, and glutamine 108. The disordered stretch occupies residues 282–313 (LVHNKPLTPSEAEIEQNPRARSAKLRVAQKLA).

The protein belongs to the methyltransferase superfamily. RsmH family.

It is found in the cytoplasm. It carries out the reaction cytidine(1402) in 16S rRNA + S-adenosyl-L-methionine = N(4)-methylcytidine(1402) in 16S rRNA + S-adenosyl-L-homocysteine + H(+). Specifically methylates the N4 position of cytidine in position 1402 (C1402) of 16S rRNA. This Magnetococcus marinus (strain ATCC BAA-1437 / JCM 17883 / MC-1) protein is Ribosomal RNA small subunit methyltransferase H.